A 163-amino-acid chain; its full sequence is MGNLTHFDENGASRMVDVTEKPATERVAVAAGEITMRPQTLDRILRKGFEKGDVLEVARLAGIMAAKKVDGLIPLCHQINLTSVKLAFQPDEAHSRVVITAQVKCTAPTGVEMEALTAVSVAALTIYDMCKAMDREMVIGAVRLLEKSGGRSGHFVRDAQDRE.

Residues 75 to 77 (LCH) and 113 to 114 (ME) contribute to the substrate site. Residue D128 is part of the active site.

Belongs to the MoaC family. In terms of assembly, homohexamer; trimer of dimers.

The enzyme catalyses (8S)-3',8-cyclo-7,8-dihydroguanosine 5'-triphosphate = cyclic pyranopterin phosphate + diphosphate. Its pathway is cofactor biosynthesis; molybdopterin biosynthesis. Its function is as follows. Catalyzes the conversion of (8S)-3',8-cyclo-7,8-dihydroguanosine 5'-triphosphate to cyclic pyranopterin monophosphate (cPMP). The protein is Cyclic pyranopterin monophosphate synthase of Magnetococcus marinus (strain ATCC BAA-1437 / JCM 17883 / MC-1).